Reading from the N-terminus, the 512-residue chain is Beta-glucosidase 44 (512 aa).

Positions 1–23 are cleaved as a signal peptide; it reads MRHLSSPPWPLLLLLLLSSFTSG. An a beta-D-glucoside-binding site is contributed by Q58. Residue N86 is glycosylated (N-linked (GlcNAc...) asparagine). Residues H159 and 204 to 205 contribute to the a beta-D-glucoside site; that span reads NE. The active-site Proton donor is the E205. The cysteines at positions 224 and 231 are disulfide-linked. N230 carries N-linked (GlcNAc...) asparagine glycosylation. A beta-D-glucoside contacts are provided by Y347 and E419. E419 (nucleophile) is an active-site residue. An N-linked (GlcNAc...) asparagine glycan is attached at N427. A beta-D-glucoside-binding positions include W466, 473–474, and F482; that span reads EW.

The protein belongs to the glycosyl hydrolase 1 family. As to quaternary structure, homodimer.

It is found in the secreted. It catalyses the reaction Hydrolysis of terminal, non-reducing beta-D-glucosyl residues with release of beta-D-glucose.. In terms of biological role, hydrolyzes p-nitrophenyl beta-D-glucoside, p-nitrophenyl beta-D-mannoside, cellobiose, 4-methylumbelliferyl-beta-D-glucoside, laminarin, amygdalin, esculin and gentiobiose. The polypeptide is Beta-glucosidase 44 (Arabidopsis thaliana (Mouse-ear cress)).